The following is a 159-amino-acid chain: uncharacterized protein (159 aa).

3 helical membrane-spanning segments follow: residues 10-30 (FLSMFFMAILFFPAFNASLFF), 52-72 (MLILCFGFMSFSFLNIHVILL), and 96-116 (LTLIFLLIAIVIAPLIAPFVT).

The protein localises to the membrane. This is an uncharacterized protein from Escherichia coli (strain K12).